The sequence spans 311 residues: Aspartate carbamoyltransferase catalytic subunit (311 aa).

2 residues coordinate carbamoyl phosphate: Arg55 and Thr56. Lys84 lines the L-aspartate pocket. Residues Arg105, His133, and Gln136 each contribute to the carbamoyl phosphate site. Residues Arg166 and Arg229 each contribute to the L-aspartate site. The carbamoyl phosphate site is built by Leu268 and Pro269.

Belongs to the aspartate/ornithine carbamoyltransferase superfamily. ATCase family. In terms of assembly, heterododecamer (2C3:3R2) of six catalytic PyrB chains organized as two trimers (C3), and six regulatory PyrI chains organized as three dimers (R2).

The catalysed reaction is carbamoyl phosphate + L-aspartate = N-carbamoyl-L-aspartate + phosphate + H(+). The protein operates within pyrimidine metabolism; UMP biosynthesis via de novo pathway; (S)-dihydroorotate from bicarbonate: step 2/3. In terms of biological role, catalyzes the condensation of carbamoyl phosphate and aspartate to form carbamoyl aspartate and inorganic phosphate, the committed step in the de novo pyrimidine nucleotide biosynthesis pathway. The protein is Aspartate carbamoyltransferase catalytic subunit of Alkaliphilus metalliredigens (strain QYMF).